A 606-amino-acid chain; its full sequence is Threonine dehydratase 1 biosynthetic, chloroplastic (606 aa).

Lys154 is modified (N6-(pyridoxal phosphate)lysine). 2 consecutive ACT-like domains span residues 432–504 and 526–597; these read AVLA…NLTD and LLCR…MESL.

This sequence belongs to the serine/threonine dehydratase family. Pyridoxal 5'-phosphate is required as a cofactor. Expressed constitutively in all tissues examined including root, stem, petiole, leaf, immature flower bud, unopened flower and opened flower with the highest expression in opened flower and lowest in leaf.

It is found in the plastid. The protein resides in the chloroplast. It catalyses the reaction L-threonine = 2-oxobutanoate + NH4(+). The protein operates within amino-acid biosynthesis; L-isoleucine biosynthesis; 2-oxobutanoate from L-threonine: step 1/1. Strongly inhibited by 1 mM isoleucine. In terms of biological role, has a housekeeping role in isoleucine biosynthesis. This chain is Threonine dehydratase 1 biosynthetic, chloroplastic, found in Solanum lycopersicum (Tomato).